The following is a 435-amino-acid chain: MAAYLEIEKVIGREILDSRGNPTVEAEVYLADGTVGRGAAPSGASTGEFEALELRDKDKSRYLGKGVTKAVENINTVINDCLFGIDASDIYAVDAAMIKADGTKDKSNLGANAILAVSIAAARAASVSLDIPLYRFLGGVSGNRLPVPMMNIINGGCHALSSGLDVQEFMIMPVGAPSFKECLRWCAEVFHALAAILKERGLATSVGDEGGFAPALKSDEEAIETILQAVEKAGYKPGRDFRIAMDAASSEWKSEKGKGYYKLPKAGTEYTAEELIEHWAKLCEKYPIISIEDGLDEEDWEGWKKLTDRLGDKVQLVGDDLFVTNTERLSKGIELGAGNAILIKLNQIGSVSETLEAIKMAHKAGYTAISSHRSGETADTTIADLAVALNTCQIKTGAPSRSERVAKYNQLLRIEEQLGASAVYPGIRAFNVNND.

Gln-167 contacts (2R)-2-phosphoglycerate. Catalysis depends on Glu-209, which acts as the Proton donor. The Mg(2+) site is built by Asp-246, Glu-292, and Asp-319. The (2R)-2-phosphoglycerate site is built by Lys-344, Arg-373, Ser-374, and Lys-395. Residue Lys-344 is the Proton acceptor of the active site.

Belongs to the enolase family. Mg(2+) serves as cofactor.

The protein localises to the cytoplasm. Its subcellular location is the secreted. It localises to the cell surface. It carries out the reaction (2R)-2-phosphoglycerate = phosphoenolpyruvate + H2O. The protein operates within carbohydrate degradation; glycolysis; pyruvate from D-glyceraldehyde 3-phosphate: step 4/5. In terms of biological role, catalyzes the reversible conversion of 2-phosphoglycerate (2-PG) into phosphoenolpyruvate (PEP). It is essential for the degradation of carbohydrates via glycolysis. The polypeptide is Enolase (Lachnospira eligens (strain ATCC 27750 / DSM 3376 / VPI C15-48 / C15-B4) (Eubacterium eligens)).